The chain runs to 318 residues: MMVDPNGNESSATYFILIGLPGLEEAQFWLAFPLCSLYLIAVLGNLTIIYIVRTEHSLHEPMYIFLCMLSGIDILISTSSMPKMLAIFWFNSTTIQFDACLLQMFAIHSLSGMESTVLLAMAFDRYVAICHPLRHATVLTLPRVTKIGVAAVVRGAALMAPLPVFIKQLPFCRSNILSHSYCLHQDVMKLACDDIRVNVVYGLIVIISAIGLDSLLISFSYLLILKTVLGLTREAQAKAFGTCVSHVCAVFIFYVPFIGLSMVHRFSKRRDSPLPVILANIYLLVPPVLNPIVYGVKTKEIRQRILRLFHVATHASEP.

Residues 1–31 (MMVDPNGNESSATYFILIGLPGLEEAQFWLA) are Extracellular-facing. N-linked (GlcNAc...) asparagine glycosylation occurs at Asn8. The helical transmembrane segment at 32–52 (FPLCSLYLIAVLGNLTIIYIV) threads the bilayer. Topologically, residues 53–60 (RTEHSLHE) are cytoplasmic. The chain crosses the membrane as a helical span at residues 61-81 (PMYIFLCMLSGIDILISTSSM). The Extracellular segment spans residues 82–100 (PKMLAIFWFNSTTIQFDAC). Asn91 carries an N-linked (GlcNAc...) asparagine glycan. Cys100 and Cys182 are oxidised to a cystine. A helical transmembrane segment spans residues 101–123 (LLQMFAIHSLSGMESTVLLAMAF). At 124–145 (DRYVAICHPLRHATVLTLPRVT) the chain is on the cytoplasmic side. A helical membrane pass occupies residues 146–166 (KIGVAAVVRGAALMAPLPVFI). Topologically, residues 167–198 (KQLPFCRSNILSHSYCLHQDVMKLACDDIRVN) are extracellular. A helical transmembrane segment spans residues 199–219 (VVYGLIVIISAIGLDSLLISF). Residues 220 to 239 (SYLLILKTVLGLTREAQAKA) lie on the Cytoplasmic side of the membrane. Residues 240-260 (FGTCVSHVCAVFIFYVPFIGL) traverse the membrane as a helical segment. The Extracellular segment spans residues 261 to 275 (SMVHRFSKRRDSPLP). The chain crosses the membrane as a helical span at residues 276 to 296 (VILANIYLLVPPVLNPIVYGV). Topologically, residues 297–318 (KTKEIRQRILRLFHVATHASEP) are cytoplasmic.

It belongs to the G-protein coupled receptor 1 family. In terms of tissue distribution, highly expressed in prostate. Very low levels may be detected in some other tissues, such as placenta, skeletal muscle, heart, ovary and testis. Up-regulated in prostate cancers.

Its subcellular location is the cell membrane. In terms of biological role, odorant receptor. In Homo sapiens (Human), this protein is Olfactory receptor 51E1 (OR51E1).